Here is a 333-residue protein sequence, read N- to C-terminus: 4-hydroxyproline 2-epimerase (333 aa).

The active-site Proton acceptor is C90. Substrate-binding positions include 91–92 (GH), H223, and D249. The Proton donor role is filled by C253. 254-255 (GT) lines the substrate pocket.

The protein belongs to the proline racemase family.

The catalysed reaction is trans-4-hydroxy-L-proline = cis-4-hydroxy-D-proline. In terms of biological role, catalyzes the epimerization of trans-4-hydroxy-L-proline (t4LHyp) to cis-4-hydroxy-D-proline (c4DHyp). Is likely involved in a degradation pathway that converts t4LHyp to alpha-ketoglutarate. Displays no proline racemase activity. This Shewanella loihica (strain ATCC BAA-1088 / PV-4) protein is 4-hydroxyproline 2-epimerase.